The chain runs to 348 residues: Anthranilate phosphoribosyltransferase (348 aa).

5-phospho-alpha-D-ribose 1-diphosphate-binding positions include Gly89, 92–93, Thr97, 99–102, 117–125, and Ser129; these read GD, NIST, and KHGNRSASS. Residue Gly89 coordinates anthranilate. Ser101 contributes to the Mg(2+) binding site. Asn120 contributes to the anthranilate binding site. Anthranilate is bound at residue Arg175. Asp234 and Glu235 together coordinate Mg(2+).

Belongs to the anthranilate phosphoribosyltransferase family. Homodimer. Mg(2+) serves as cofactor.

The catalysed reaction is N-(5-phospho-beta-D-ribosyl)anthranilate + diphosphate = 5-phospho-alpha-D-ribose 1-diphosphate + anthranilate. It functions in the pathway amino-acid biosynthesis; L-tryptophan biosynthesis; L-tryptophan from chorismate: step 2/5. Its function is as follows. Catalyzes the transfer of the phosphoribosyl group of 5-phosphorylribose-1-pyrophosphate (PRPP) to anthranilate to yield N-(5'-phosphoribosyl)-anthranilate (PRA). The polypeptide is Anthranilate phosphoribosyltransferase (Synechocystis sp. (strain ATCC 27184 / PCC 6803 / Kazusa)).